Consider the following 320-residue polypeptide: Biotin synthase 2 (320 aa).

The Radical SAM core domain occupies 34 to 261 (NVVQCSKLLS…ASYVRLSAGR (228 aa)). Cys-49, Cys-53, and Cys-56 together coordinate [4Fe-4S] cluster. Residues Cys-93, Cys-124, Cys-184, and Arg-256 each contribute to the [2Fe-2S] cluster site.

This sequence belongs to the radical SAM superfamily. Biotin synthase family. As to quaternary structure, homodimer. [4Fe-4S] cluster serves as cofactor. It depends on [2Fe-2S] cluster as a cofactor.

The catalysed reaction is (4R,5S)-dethiobiotin + (sulfur carrier)-SH + 2 reduced [2Fe-2S]-[ferredoxin] + 2 S-adenosyl-L-methionine = (sulfur carrier)-H + biotin + 2 5'-deoxyadenosine + 2 L-methionine + 2 oxidized [2Fe-2S]-[ferredoxin]. It participates in cofactor biosynthesis; biotin biosynthesis; biotin from 7,8-diaminononanoate: step 2/2. Catalyzes the conversion of dethiobiotin (DTB) to biotin by the insertion of a sulfur atom into dethiobiotin via a radical-based mechanism. The chain is Biotin synthase 2 from Paracoccus denitrificans (strain Pd 1222).